The sequence spans 411 residues: Arginine biosynthesis bifunctional protein ArgJ (411 aa).

Residues Thr160, Lys186, Thr197, Glu283, Asn406, and Thr411 each coordinate substrate. Catalysis depends on Thr197, which acts as the Nucleophile.

It belongs to the ArgJ family. Heterotetramer of two alpha and two beta chains.

It localises to the cytoplasm. It carries out the reaction N(2)-acetyl-L-ornithine + L-glutamate = N-acetyl-L-glutamate + L-ornithine. The catalysed reaction is L-glutamate + acetyl-CoA = N-acetyl-L-glutamate + CoA + H(+). Its pathway is amino-acid biosynthesis; L-arginine biosynthesis; L-ornithine and N-acetyl-L-glutamate from L-glutamate and N(2)-acetyl-L-ornithine (cyclic): step 1/1. The protein operates within amino-acid biosynthesis; L-arginine biosynthesis; N(2)-acetyl-L-ornithine from L-glutamate: step 1/4. Feedback inhibition by L-ornithine. Catalyzes two activities which are involved in the cyclic version of arginine biosynthesis: the synthesis of N-acetylglutamate from glutamate and acetyl-CoA as the acetyl donor, and of ornithine by transacetylation between N(2)-acetylornithine and glutamate. This chain is Arginine biosynthesis bifunctional protein ArgJ, found in Halalkalibacterium halodurans (strain ATCC BAA-125 / DSM 18197 / FERM 7344 / JCM 9153 / C-125) (Bacillus halodurans).